The sequence spans 82 residues: Endocuticle structural glycoprotein SgAbd-5 (82 aa).

Glutamine 1 bears the Pyrrolidone carboxylic acid mark. In terms of domain architecture, Chitin-binding type R&amp;R spans leucine 18–serine 82.

Functionally, component of the soft endocuticle of desert locust. The chain is Endocuticle structural glycoprotein SgAbd-5 from Schistocerca gregaria (Desert locust).